The following is a 192-amino-acid chain: Adenylate kinase (192 aa).

11-16 (GSGKGT) lines the ATP pocket. The tract at residues 31 to 60 (STGDIFRANVKGETPLGIEAKKYMDNGDFV) is NMP. AMP is bound by residues Thr-32, Arg-37, 58–60 (DFV), 86–89 (GYPR), and Gln-93. The interval 127-137 (GRAKETGRSDD) is LID. Arg-128 is a binding site for ATP. 2 residues coordinate AMP: Arg-134 and Arg-145. Residue Gly-173 coordinates ATP.

The protein belongs to the adenylate kinase family. In terms of assembly, monomer.

It is found in the cytoplasm. It carries out the reaction AMP + ATP = 2 ADP. It functions in the pathway purine metabolism; AMP biosynthesis via salvage pathway; AMP from ADP: step 1/1. Its function is as follows. Catalyzes the reversible transfer of the terminal phosphate group between ATP and AMP. Plays an important role in cellular energy homeostasis and in adenine nucleotide metabolism. This chain is Adenylate kinase, found in Pseudarthrobacter chlorophenolicus (strain ATCC 700700 / DSM 12829 / CIP 107037 / JCM 12360 / KCTC 9906 / NCIMB 13794 / A6) (Arthrobacter chlorophenolicus).